We begin with the raw amino-acid sequence, 261 residues long: Protein LIKE COV 2 (261 aa).

The segment at 1–38 (MAEGKEATTSSLSQGLTPHQDPDDAPKSPPNSPNSSTR) is disordered. The Cytoplasmic portion of the chain corresponds to 1–56 (MAEGKEATTSSLSQGLTPHQDPDDAPKSPPNSPNSSTRKACYGVLQSWVSKKFMTG). Residues 7-17 (ATTSSLSQGLT) are compositionally biased toward polar residues. Residues 57–77 (FVVLFPVAVTFLITWWFIQFV) traverse the membrane as a helical segment. Topologically, residues 78 to 91 (DGFFSPIYENLGVD) are extracellular. Residues 92–112 (IFGLGFITSVLFTFFVGIFAS) traverse the membrane as a helical segment. The Cytoplasmic portion of the chain corresponds to 113–261 (SWLGSTVFWL…HSLRVPLNRL (149 aa)).

The protein belongs to the plant COV1 protein family.

The protein localises to the membrane. The sequence is that of Protein LIKE COV 2 from Arabidopsis thaliana (Mouse-ear cress).